The primary structure comprises 273 residues: Exosome complex component Rrp42 (273 aa).

Belongs to the RNase PH family. Rrp42 subfamily. As to quaternary structure, component of the archaeal exosome complex. Forms a hexameric ring-like arrangement composed of 3 Rrp41-Rrp42 heterodimers. The hexameric ring associates with a trimer of Rrp4 and/or Csl4 subunits.

Its subcellular location is the cytoplasm. In terms of biological role, non-catalytic component of the exosome, which is a complex involved in RNA degradation. Contributes to the structuring of the Rrp41 active site. The sequence is that of Exosome complex component Rrp42 from Thermococcus gammatolerans (strain DSM 15229 / JCM 11827 / EJ3).